The primary structure comprises 61 residues: Putative neurotoxin-A (61 aa).

Residues Met1 to Ala19 form the signal peptide. Cystine bridges form between Cys31/Cys50, Cys36/Cys55, and Cys40/Cys57.

This sequence belongs to the short scorpion toxin superfamily. Expressed by the venom gland.

It is found in the secreted. In Lychas mucronatus (Chinese swimming scorpion), this protein is Putative neurotoxin-A.